The following is a 355-amino-acid chain: Phosphate acyltransferase (355 aa).

Belongs to the PlsX family. In terms of assembly, homodimer. Probably interacts with PlsY.

Its subcellular location is the cytoplasm. It catalyses the reaction a fatty acyl-[ACP] + phosphate = an acyl phosphate + holo-[ACP]. The protein operates within lipid metabolism; phospholipid metabolism. In terms of biological role, catalyzes the reversible formation of acyl-phosphate (acyl-PO(4)) from acyl-[acyl-carrier-protein] (acyl-ACP). This enzyme utilizes acyl-ACP as fatty acyl donor, but not acyl-CoA. This is Phosphate acyltransferase from Erythrobacter litoralis (strain HTCC2594).